The sequence spans 187 residues: Elongation factor P (187 aa).

This sequence belongs to the elongation factor P family.

The protein resides in the cytoplasm. Its pathway is protein biosynthesis; polypeptide chain elongation. Involved in peptide bond synthesis. Stimulates efficient translation and peptide-bond synthesis on native or reconstituted 70S ribosomes in vitro. Probably functions indirectly by altering the affinity of the ribosome for aminoacyl-tRNA, thus increasing their reactivity as acceptors for peptidyl transferase. This is Elongation factor P from Mycobacterium avium (strain 104).